A 286-amino-acid chain; its full sequence is Phosphoribosylaminoimidazole-succinocarboxamide synthase (286 aa).

Belongs to the SAICAR synthetase family.

The enzyme catalyses 5-amino-1-(5-phospho-D-ribosyl)imidazole-4-carboxylate + L-aspartate + ATP = (2S)-2-[5-amino-1-(5-phospho-beta-D-ribosyl)imidazole-4-carboxamido]succinate + ADP + phosphate + 2 H(+). It participates in purine metabolism; IMP biosynthesis via de novo pathway; 5-amino-1-(5-phospho-D-ribosyl)imidazole-4-carboxamide from 5-amino-1-(5-phospho-D-ribosyl)imidazole-4-carboxylate: step 1/2. The sequence is that of Phosphoribosylaminoimidazole-succinocarboxamide synthase from Histophilus somni (strain 2336) (Haemophilus somnus).